The sequence spans 351 residues: DNA polymerase IV (351 aa).

Residues Ile4–Gly185 form the UmuC domain. 2 residues coordinate Mg(2+): Asp8 and Asp103. Residue Glu104 is part of the active site.

The protein belongs to the DNA polymerase type-Y family. As to quaternary structure, monomer. Mg(2+) is required as a cofactor.

It is found in the cytoplasm. The catalysed reaction is DNA(n) + a 2'-deoxyribonucleoside 5'-triphosphate = DNA(n+1) + diphosphate. Its function is as follows. Poorly processive, error-prone DNA polymerase involved in untargeted mutagenesis. Copies undamaged DNA at stalled replication forks, which arise in vivo from mismatched or misaligned primer ends. These misaligned primers can be extended by PolIV. Exhibits no 3'-5' exonuclease (proofreading) activity. May be involved in translesional synthesis, in conjunction with the beta clamp from PolIII. In Shigella dysenteriae serotype 1 (strain Sd197), this protein is DNA polymerase IV.